A 58-amino-acid polypeptide reads, in one-letter code: Metallothionein (58 aa).

The interval 1–29 is beta; that stretch reads PDPCCAEGTCECEEGKCKAGCKCTSCRCS. Residues cysteine 4, cysteine 5, cysteine 10, cysteine 12, cysteine 17, cysteine 21, cysteine 23, cysteine 26, cysteine 28, cysteine 31, cysteine 34, cysteine 38, cysteine 40, cysteine 46, cysteine 50, cysteine 54, cysteine 56, and cysteine 57 each coordinate a divalent metal cation. An alpha region spans residues 30–58; it reads PCEKCTSECECKSKEECAKNCTKPCSCCP.

Functionally, metallothioneins have a high content of cysteine residues that bind various heavy metals. Class I MTS in crustacea are involved in the sequestration of elevated levels of heavy-metal ions. The sequence is that of Metallothionein from Potamon potamios.